Reading from the N-terminus, the 289-residue chain is ATP synthase gamma chain (289 aa).

It belongs to the ATPase gamma chain family. In terms of assembly, F-type ATPases have 2 components, CF(1) - the catalytic core - and CF(0) - the membrane proton channel. CF(1) has five subunits: alpha(3), beta(3), gamma(1), delta(1), epsilon(1). CF(0) has three main subunits: a, b and c.

The protein localises to the cell membrane. Produces ATP from ADP in the presence of a proton gradient across the membrane. The gamma chain is believed to be important in regulating ATPase activity and the flow of protons through the CF(0) complex. The polypeptide is ATP synthase gamma chain (Mycoplasmoides gallisepticum (strain R(low / passage 15 / clone 2)) (Mycoplasma gallisepticum)).